A 500-amino-acid chain; its full sequence is ATP synthase subunit alpha (500 aa).

Residue 169–176 (GDRQTGKT) coordinates ATP.

This sequence belongs to the ATPase alpha/beta chains family. F-type ATPases have 2 components, CF(1) - the catalytic core - and CF(0) - the membrane proton channel. CF(1) has five subunits: alpha(3), beta(3), gamma(1), delta(1), epsilon(1). CF(0) has three main subunits: a(1), b(2) and c(9-12). The alpha and beta chains form an alternating ring which encloses part of the gamma chain. CF(1) is attached to CF(0) by a central stalk formed by the gamma and epsilon chains, while a peripheral stalk is formed by the delta and b chains.

It localises to the cell membrane. The enzyme catalyses ATP + H2O + 4 H(+)(in) = ADP + phosphate + 5 H(+)(out). Functionally, produces ATP from ADP in the presence of a proton gradient across the membrane. The alpha chain is a regulatory subunit. The protein is ATP synthase subunit alpha of Clostridioides difficile (strain 630) (Peptoclostridium difficile).